Consider the following 564-residue polypeptide: NAD-dependent malic enzyme (564 aa).

Residue Y104 is the Proton donor of the active site. R157 provides a ligand contact to NAD(+). The active-site Proton acceptor is K175. A divalent metal cation contacts are provided by E246, D247, and D270. D270 and N417 together coordinate NAD(+).

The protein belongs to the malic enzymes family. In terms of assembly, homotetramer. Requires Mg(2+) as cofactor. Mn(2+) is required as a cofactor.

The enzyme catalyses (S)-malate + NAD(+) = pyruvate + CO2 + NADH. It catalyses the reaction oxaloacetate + H(+) = pyruvate + CO2. The chain is NAD-dependent malic enzyme from Aeromonas salmonicida (strain A449).